Here is a 351-residue protein sequence, read N- to C-terminus: MFRAIPFTATVHPYAITAPRLVVKMSAIATKNTRVESLEVKPPAHPTYDLKEVMQLALSEDAGNLGDVTCKATIPLDMESDAHFLAKEDGIVAGIALAEMIFAEVDPSLKVEWYVNDGDKVHKGLKFGKVQGNAYNIVIAERVVLNFMQRMSGIATLTKEMADAAHPAYILETRKTAPGLRLVDKWAVLIGGGKNHRMGLFDMVMIKDNHISAAGGVGKALKSVDQYLEQNKLQIGVEVETRTIEEVREVLEYASQTKTSLTRIMLDNMVVPLSNGDIDVSMLKEAVELINGRFDTEASGNVTLETVHKIGQTGVTYISSGALTHSVKALDISLKIDTELALEVGRRTKRA.

Substrate is bound by residues arginine 142, 173 to 175 (TRK), arginine 197, lysine 207, glutamate 240, aspartate 267, 299 to 301 (SGN), and 320 to 322 (SGA).

The protein belongs to the NadC/ModD family.

The protein resides in the mitochondrion. The enzyme catalyses nicotinate beta-D-ribonucleotide + CO2 + diphosphate = quinolinate + 5-phospho-alpha-D-ribose 1-diphosphate + 2 H(+). It participates in alkaloid biosynthesis; nicotine biosynthesis. The protein operates within cofactor biosynthesis; NAD(+) biosynthesis; nicotinate D-ribonucleotide from quinolinate: step 1/1. Its function is as follows. Involved in the biosynthesis of pyridine alkaloid natural products, leading mainly to the production of anabasine, anatabine, nicotine and nornicotine, effective deterrents against herbivores with antiparasitic and pesticide properties (neurotoxins); nornicotine serves as the precursor in the synthesis of the carcinogen compound N'-nitrosonornicotine (NNN). Involved in the catabolism of quinolinic acid (QA). The polypeptide is Quinolinate phosphoribosyltransferase [decarboxylating] 2, mitochondrial (Nicotiana glauca (Glaucous tobacco)).